The following is a 360-amino-acid chain: MSADRINLLRTKVFDKSKWMQLPRDVVIGHDVIEQIPAVCEDLALGDSVLIVSGGQTRDIAGKRVEALLAGSYDVVTFAANDGNPFETIRKAEEAAATAGFVIGVGGGRVIDTAKIASYNTDRHFISVPTAASHDGIASSRASVPTADGNVSLAAEPPIAVVADTAVIASAPHRLLASGCADIIANYTAILDWELSHRLRGEPLSEYALTLSRMTAEILFKNADLIKPHSEESAWLVTKALVSSGVAMSIAGSSRPGSGGEHKFSHALEKLAPGKGLHGEKCGIGAIITMYLHGGDWEGIRDSLKKIGAPTTPAAIGVDDETAVAALLAARTIRPERFTILDMGLTEESARDLVKMLYRE.

Residues 108 to 112 (GRVID) and 130 to 133 (TAAS) contribute to the NAD(+) site. D135 contacts substrate. An NAD(+)-binding site is contributed by S139. A substrate-binding site is contributed by D182. Zn(2+) contacts are provided by D182 and H262. H266 is a binding site for substrate. H278 provides a ligand contact to Zn(2+).

Belongs to the glycerol-1-phosphate dehydrogenase family. Zn(2+) is required as a cofactor.

The protein localises to the cytoplasm. It catalyses the reaction sn-glycerol 1-phosphate + NAD(+) = dihydroxyacetone phosphate + NADH + H(+). It carries out the reaction sn-glycerol 1-phosphate + NADP(+) = dihydroxyacetone phosphate + NADPH + H(+). The protein operates within membrane lipid metabolism; glycerophospholipid metabolism. Functionally, catalyzes the NAD(P)H-dependent reduction of dihydroxyacetonephosphate (DHAP or glycerone phosphate) to glycerol 1-phosphate (G1P). The G1P thus generated is used as the glycerophosphate backbone of phospholipids in the cellular membranes of Archaea. The sequence is that of Glycerol-1-phosphate dehydrogenase [NAD(P)+] from Methanoculleus marisnigri (strain ATCC 35101 / DSM 1498 / JR1).